Reading from the N-terminus, the 179-residue chain is Large ribosomal subunit protein uL5 (179 aa).

This sequence belongs to the universal ribosomal protein uL5 family. As to quaternary structure, part of the 50S ribosomal subunit; part of the 5S rRNA/L5/L18/L25 subcomplex. Contacts the 5S rRNA and the P site tRNA. Forms a bridge to the 30S subunit in the 70S ribosome.

In terms of biological role, this is one of the proteins that bind and probably mediate the attachment of the 5S RNA into the large ribosomal subunit, where it forms part of the central protuberance. In the 70S ribosome it contacts protein S13 of the 30S subunit (bridge B1b), connecting the 2 subunits; this bridge is implicated in subunit movement. Contacts the P site tRNA; the 5S rRNA and some of its associated proteins might help stabilize positioning of ribosome-bound tRNAs. This Listeria innocua serovar 6a (strain ATCC BAA-680 / CLIP 11262) protein is Large ribosomal subunit protein uL5.